Here is a 103-residue protein sequence, read N- to C-terminus: Large ribosomal subunit protein bL21 (103 aa).

Belongs to the bacterial ribosomal protein bL21 family. Part of the 50S ribosomal subunit. Contacts protein L20.

In terms of biological role, this protein binds to 23S rRNA in the presence of protein L20. The sequence is that of Large ribosomal subunit protein bL21 from Clostridium beijerinckii (strain ATCC 51743 / NCIMB 8052) (Clostridium acetobutylicum).